Reading from the N-terminus, the 316-residue chain is Ribosomal RNA small subunit methyltransferase H (316 aa).

Residues 35–37 (AGH), Asp-55, Phe-84, Asp-105, and Gln-112 each bind S-adenosyl-L-methionine.

The protein belongs to the methyltransferase superfamily. RsmH family.

It localises to the cytoplasm. The enzyme catalyses cytidine(1402) in 16S rRNA + S-adenosyl-L-methionine = N(4)-methylcytidine(1402) in 16S rRNA + S-adenosyl-L-homocysteine + H(+). In terms of biological role, specifically methylates the N4 position of cytidine in position 1402 (C1402) of 16S rRNA. The protein is Ribosomal RNA small subunit methyltransferase H of Streptococcus suis (strain 05ZYH33).